Reading from the N-terminus, the 783-residue chain is MNLERSERIEIPVLPLRDVVVYPHMVIPLFVGREKSISCLETAMETNKQVLLVAQKQADTDEPTVDDLFEVGTVATILQLLKLPDGTVKVLVEGQQRAKINHFKESDFFLAEAEFIVTPELDEREQEVIVRSAINQFEGFIKLNKKIPPEVLTSLNGIDEAARLADTIAAHMPLKLVDKQQVLEIIDVTERLEFLMGQMESEIDLLQVEKRIRGRVKKQMEKSQREYYLNEQMKAIQKELGEMEDAPDEFETLQKKIDESKMPQEAREKTEQELQKLKMMSPMSAEATVVRSYIDWMVSVPWTKRSKVKKNLAKAEEILNEDHYGLERVKERILEYLAVQNRINKLKGPILCLVGPPGVGKTSLGRSIASATGRKYVRMALGGVRDEAEIRGHRRTYIGSLPGKLIQKMSKVGVKNPLFLLDEIDKMSSDMRGDPASALLEVLDPEQNNSFNDHYLEVDYDLSDVMFVATSNSMNIPGPLLDRMEVIRLSGYTEDEKLNIAKRHLVEKQVQRNGLKPNEIVIEDSAIIGIIRYYTREAGVRGLEREISKICRKAVKNILLDKDIKSVTVTMDNLKEYLGVQRFDYGKADESNRIGQVTGLAWTEVGGDLLTIETQSMPGKGKLTQTGSLGDVMQESIQAAMTVVRSRADKLGINSDFYEKKDIHVHVPEGATPKDGPSAGTAMCTALVSALTGNPVKAEVAMTGEITLRGEVLPIGGLKEKLLAAHRGGIKTVLIPKDNERDLEEIPENVIADLQVIPVQWIDEVLKVALERDPTGVEFEAKK.

Residues 11–203 (IPVLPLRDVV…FLMGQMESEI (193 aa)) form the Lon N-terminal domain. An ATP-binding site is contributed by 355-362 (GPPGVGKT). The region spanning 591 to 772 (SNRIGQVTGL…DEVLKVALER (182 aa)) is the Lon proteolytic domain. Catalysis depends on residues serine 678 and lysine 721.

The protein belongs to the peptidase S16 family. As to quaternary structure, homohexamer. Organized in a ring with a central cavity.

Its subcellular location is the cytoplasm. It carries out the reaction Hydrolysis of proteins in presence of ATP.. ATP-dependent serine protease that mediates the selective degradation of mutant and abnormal proteins as well as certain short-lived regulatory proteins. Required for cellular homeostasis and for survival from DNA damage and developmental changes induced by stress. Degrades polypeptides processively to yield small peptide fragments that are 5 to 10 amino acids long. Binds to DNA in a double-stranded, site-specific manner. Regulates swarmer cell differentiation of V.parahaemolyticus. This is Lon protease from Vibrio parahaemolyticus serotype O3:K6 (strain RIMD 2210633).